A 314-amino-acid chain; its full sequence is 3'-5' exoribonuclease YhaM (314 aa).

Positions 22 to 90 (SSTKGIASNG…QLKLRNIRPV (69 aa)) form a DNA-binding region, OB. Positions 163–279 (HVVSMLNLAK…LHYIDNLDAK (117 aa)) constitute an HD domain.

It belongs to the YhaM family. The cofactor is Mn(2+). Co(2+) is required as a cofactor.

Its function is as follows. Shows a 3'-5' exoribonuclease activity as well as single-stranded DNA 3'-5'exonuclease activity. Plays a role in the secondary pathway of 23S rRNA 3' end maturation. This chain is 3'-5' exoribonuclease YhaM, found in Bacillus subtilis (strain 168).